The sequence spans 176 residues: R-phycoerythrin beta chain (176 aa).

Residues Cys50 and Cys61 each coordinate phycourobilin. Asn72 carries the post-translational modification N4-methylasparagine. (2R,3E)-phycoerythrobilin contacts are provided by Cys82 and Cys158.

It belongs to the phycobiliprotein family. As to quaternary structure, heterodimer of an alpha and a beta chain. In terms of processing, contains two covalently linked phycoerythrobilin chromophores and one covalently linked phycourobilin chromophore.

The protein resides in the plastid. The protein localises to the chloroplast thylakoid membrane. In terms of biological role, light-harvesting photosynthetic bile pigment-protein from the phycobiliprotein complex. The chain is R-phycoerythrin beta chain (cpeB) from Aglaothamnion neglectum (Red alga).